The primary structure comprises 367 residues: Dihydroorotate dehydrogenase (quinone) (367 aa).

FMN is bound by residues 61–65 (AGFDK) and threonine 85. Substrate is bound at residue lysine 65. 110–114 (NRMGF) contributes to the substrate binding site. Positions 138 and 169 each coordinate FMN. A substrate-binding site is contributed by asparagine 169. Serine 172 acts as the Nucleophile in catalysis. Substrate is bound at residue asparagine 174. The FMN site is built by lysine 212 and threonine 240. 241–242 (NT) lines the substrate pocket. Residues glycine 263, glycine 292, and 313 to 314 (YS) each bind FMN.

Belongs to the dihydroorotate dehydrogenase family. Type 2 subfamily. In terms of assembly, monomer. FMN is required as a cofactor.

Its subcellular location is the cell membrane. It carries out the reaction (S)-dihydroorotate + a quinone = orotate + a quinol. It functions in the pathway pyrimidine metabolism; UMP biosynthesis via de novo pathway; orotate from (S)-dihydroorotate (quinone route): step 1/1. Its function is as follows. Catalyzes the conversion of dihydroorotate to orotate with quinone as electron acceptor. The protein is Dihydroorotate dehydrogenase (quinone) of Rhodospirillum rubrum (strain ATCC 11170 / ATH 1.1.1 / DSM 467 / LMG 4362 / NCIMB 8255 / S1).